The sequence spans 36 residues: F420-dependent NADP reductase (36 aa).

Residue 9–12 (TGNI) participates in NADP(+) binding.

It belongs to the F420-dependent NADP reductase family. Homotetramer.

It catalyses the reaction reduced coenzyme F420-(gamma-L-Glu)(n) + NADP(+) = oxidized coenzyme F420-(gamma-L-Glu)(n) + NADPH + 2 H(+). Catalyzes the reduction of NADP(+) with F420H(2) via hydride transfer, and the reverse reaction, i.e. the reduction of F420 with NADPH. In M.organophilum, an alcohol-fermenting methanogen containing an NADP-dependent alcohol dehydrogenase, is probably involved in the regeneration of F420H(2) required for CO(2) reduction to methane. Thus, during growth on alcohol and CO(2), the F420-dependent NADP reductase probably has the function of coupling the NADP-dependent oxidation of the alcohol to the aldehyde with the F420-dependent reduction of CO(2) to methane. In Methanogenium organophilum, this protein is F420-dependent NADP reductase (fno).